A 363-amino-acid polypeptide reads, in one-letter code: Chorismate synthase (363 aa).

Residue R48 coordinates NADP(+). Residues 125–127 (RSS), 238–239 (NA), G278, 293–297 (KPTAS), and R319 each bind FMN.

This sequence belongs to the chorismate synthase family. As to quaternary structure, homotetramer. Requires FMNH2 as cofactor.

The catalysed reaction is 5-O-(1-carboxyvinyl)-3-phosphoshikimate = chorismate + phosphate. The protein operates within metabolic intermediate biosynthesis; chorismate biosynthesis; chorismate from D-erythrose 4-phosphate and phosphoenolpyruvate: step 7/7. Its function is as follows. Catalyzes the anti-1,4-elimination of the C-3 phosphate and the C-6 proR hydrogen from 5-enolpyruvylshikimate-3-phosphate (EPSP) to yield chorismate, which is the branch point compound that serves as the starting substrate for the three terminal pathways of aromatic amino acid biosynthesis. This reaction introduces a second double bond into the aromatic ring system. The sequence is that of Chorismate synthase from Acinetobacter baumannii (strain SDF).